The primary structure comprises 110 residues: MGASGSKARGLWPFASAAGGGGSEAAGAEQALVRPRGRAVPPFVFTRRGSMFYDEDGDLAHEFYEETIVTKNGQKRAKLRRVHKNLIPQGIVKLDHPRIHVDFPVILYEV.

The N-myristoyl glycine moiety is linked to residue Gly-2. Ser-50 is modified (phosphoserine).

The protein belongs to the TUSC2 family. Myristoylation is required for tumor suppressor activity. As to expression, strong expression in heart, lung, skeletal muscle, kidney, and pancreas, followed by brain and liver, lowest levels in placenta.

Functionally, may function as a tumor suppressor, inhibiting colony formation, causing G1 arrest and ultimately inducing apoptosis in homozygous 3p21.3 120-kb region-deficient cells. This Homo sapiens (Human) protein is Tumor suppressor candidate 2 (TUSC2).